The sequence spans 386 residues: Putative prophage major tail sheath protein (386 aa).

Belongs to the myoviridae tail sheath protein family.

The protein resides in the secreted. This is Putative prophage major tail sheath protein from Pseudomonas aeruginosa (strain UCBPP-PA14).